We begin with the raw amino-acid sequence, 152 residues long: Deoxyuridine 5'-triphosphate nucleotidohydrolase (152 aa).

Residues 71–73 (RSG), Asn-84, and 88–90 (TVD) contribute to the substrate site.

The protein belongs to the dUTPase family. Mg(2+) is required as a cofactor.

It carries out the reaction dUTP + H2O = dUMP + diphosphate + H(+). It participates in pyrimidine metabolism; dUMP biosynthesis; dUMP from dCTP (dUTP route): step 2/2. This enzyme is involved in nucleotide metabolism: it produces dUMP, the immediate precursor of thymidine nucleotides and it decreases the intracellular concentration of dUTP so that uracil cannot be incorporated into DNA. This is Deoxyuridine 5'-triphosphate nucleotidohydrolase from Maricaulis maris (strain MCS10) (Caulobacter maris).